A 162-amino-acid chain; its full sequence is Caveolin-2 (162 aa).

Over 1 to 86 (MGLETEKADV…FEISKYVIYK (86 aa)) the chain is Cytoplasmic. Residue Y19 is modified to Phosphotyrosine; by SRC. 2 positions are modified to phosphoserine: S20 and S23. A Phosphotyrosine; by SRC modification is found at Y27. Position 36 is a phosphoserine (S36). Positions 87 to 107 (FLTFFLAIPMAFAAGILFAIL) form an intramembrane region, helical. Over 108–162 (SCLHIWIIMPFVKTCLMVLPSVQTIWKTITDVVIAPLCTSVGRSFSSISLQLSHD) the chain is Cytoplasmic.

The protein belongs to the caveolin family. As to quaternary structure, monomer or homodimer. Interacts with CAV1; the interaction forms a stable heterooligomeric complex that is required for targeting to lipid rafts and for caveolae formation. Tyrosine phosphorylated forms do not form heterooligomers with the Tyr-19-phosphorylated form existing as a monomer or dimer, and the Tyr-27-form as a monomer only. Interacts (tyrosine phosphorylated form) with the SH2 domain-containing proteins, RASA1, NCK1 and SRC. Interacts (tyrosine phosphorylated form) with INSR, the interaction (Tyr-27-phosphorylated form) is increased on insulin stimulation. Interacts (Tyr-19 phosphorylated form) with MAPK1 (phosphorylated form); the interaction, promoted by insulin, leads to nuclear location and MAPK1 activation. Interacts with STAT3; the interaction is increased on insulin-induced tyrosine phosphorylation leading to STAT activation. Phosphorylated on serine and tyrosine residues. CAV1 promotes phosphorylation on Ser-23 which then targets the complex to the plasma membrane, lipid rafts and caveolae. Phosphorylation on Ser-36 appears to modulate mitosis in endothelial cells. Phosphorylation on both Tyr-19 and Tyr-27 is required for insulin-induced 'Ser-727' phosphorylation of STAT3 and its activation. Phosphorylation on Tyr-19 is required for insulin-induced phosphorylation of MAPK1 and DNA binding of STAT3. Tyrosine phosphorylation is induced by both EGF and insulin (By. similarity).

It localises to the nucleus. It is found in the cytoplasm. The protein resides in the golgi apparatus membrane. Its subcellular location is the cell membrane. The protein localises to the membrane. It localises to the caveola. In terms of biological role, may act as a scaffolding protein within caveolar membranes. Interacts directly with G-protein alpha subunits and can functionally regulate their activity. Acts as an accessory protein in conjunction with CAV1 in targeting to lipid rafts and driving caveolae formation. The Ser-36 phosphorylated form has a role in modulating mitosis in endothelial cells. Positive regulator of cellular mitogenesis of the MAPK signaling pathway. Required for the insulin-stimulated nuclear translocation and activation of MAPK1 and STAT3, and the subsequent regulation of cell cycle progression. This Mustela putorius furo (European domestic ferret) protein is Caveolin-2 (CAV2).